A 262-amino-acid chain; its full sequence is Acyl-[acyl-carrier-protein]--UDP-N-acetylglucosamine O-acyltransferase (262 aa).

It belongs to the transferase hexapeptide repeat family. LpxA subfamily. In terms of assembly, homotrimer.

The protein resides in the cytoplasm. The enzyme catalyses a (3R)-hydroxyacyl-[ACP] + UDP-N-acetyl-alpha-D-glucosamine = a UDP-3-O-[(3R)-3-hydroxyacyl]-N-acetyl-alpha-D-glucosamine + holo-[ACP]. It functions in the pathway glycolipid biosynthesis; lipid IV(A) biosynthesis; lipid IV(A) from (3R)-3-hydroxytetradecanoyl-[acyl-carrier-protein] and UDP-N-acetyl-alpha-D-glucosamine: step 1/6. Involved in the biosynthesis of lipid A, a phosphorylated glycolipid that anchors the lipopolysaccharide to the outer membrane of the cell. The protein is Acyl-[acyl-carrier-protein]--UDP-N-acetylglucosamine O-acyltransferase of Salmonella dublin (strain CT_02021853).